The chain runs to 289 residues: Rhodopsin (289 aa).

Over 1–7 (YLVSPAA) the chain is Extracellular. A helical membrane pass occupies residues 8-32 (YAALGAYMFLLILIGFPVNFLTLYV). The Cytoplasmic segment spans residues 33–44 (TLEHKKLRTPLN). A helical membrane pass occupies residues 45–67 (YILLNLAVADLFMVLGGFTTTMY). At 68–81 (TSMHGYFVLGRLGC) the chain is on the extracellular side. Cysteines 81 and 158 form a disulfide. Residues 82–104 (NLEGFFATLGGEIALWSLVVLAI) traverse the membrane as a helical segment. The short motif at 105-107 (ERW) is the 'Ionic lock' involved in activated form stabilization element. Over 105–123 (ERWIVVCKPISNFRFTEDN) the chain is Cytoplasmic. The chain crosses the membrane as a helical span at residues 124-144 (AIMGLAFSWVMALTCAVPPLV). The Extracellular segment spans residues 145-173 (GWSRYIPEGMQCSCGVDYYTRAEGFNNES). N-linked (GlcNAc...) asparagine glycosylation occurs at asparagine 171. Residues 174–195 (FVIYMFIVHFPIPLSVIFFCYG) traverse the membrane as a helical segment. At 196-223 (RLLCAVKEAAAAQQESETTQRAEKEVSR) the chain is on the cytoplasmic side. The chain crosses the membrane as a helical span at residues 224–245 (MVVILVIGFLVCWLPYASVAWW). Residues 246–257 (IFCNQGSDFGPI) are Extracellular-facing. The helical transmembrane segment at 258–279 (FMTLPSFFAKRPAIYNPMIYIC) threads the bilayer. Lysine 267 is modified (N6-(retinylidene)lysine). Topologically, residues 280–289 (MNKQFRHCMI) are cytoplasmic.

The protein belongs to the G-protein coupled receptor 1 family. Opsin subfamily. Phosphorylated on some or all of the serine and threonine residues present in the C-terminal region. Post-translationally, contains one covalently linked retinal chromophore.

The protein localises to the membrane. The protein resides in the cell projection. It localises to the cilium. Its subcellular location is the photoreceptor outer segment. Its function is as follows. Photoreceptor required for image-forming vision at low light intensity. While most salt water fish species use retinal as chromophore, most freshwater fish use 3-dehydroretinal, or a mixture of retinal and 3-dehydroretinal. Light-induced isomerization of 11-cis to all-trans retinal triggers a conformational change that activates signaling via G-proteins. Subsequent receptor phosphorylation mediates displacement of the bound G-protein alpha subunit by arrestin and terminates signaling. This Batrachocottus multiradiatus (Baikal sculpin) protein is Rhodopsin (rho).